A 76-amino-acid polypeptide reads, in one-letter code: DNA-directed RNA polymerase subunit epsilon (76 aa).

It belongs to the RNA polymerase subunit epsilon family. In terms of assembly, RNAP is composed of a core of 2 alpha, a beta and a beta' subunit. The core is associated with a delta subunit, and at least one of epsilon or omega. When a sigma factor is associated with the core the holoenzyme is formed, which can initiate transcription.

The catalysed reaction is RNA(n) + a ribonucleoside 5'-triphosphate = RNA(n+1) + diphosphate. Functionally, a non-essential component of RNA polymerase (RNAP). This is DNA-directed RNA polymerase subunit epsilon from Lactococcus lactis subsp. lactis (strain IL1403) (Streptococcus lactis).